The following is a 314-amino-acid chain: MTERNQTVISQFLLLGLPIPPEHQHVFYALFLSMYLTTVLGNLIIIILILLDSHLHTPMYLFLSNLSFSDLCFSSVTMPKLLQNMQSQVPSIPYAGCLSQIYFFLFFGDLGNFLLVAMAYDRYVAICFPLHYMSIMSPKLCVSLVVLSWVLTTFHAMLHTLLMARLSFCEDNVIPHFFCDMSALLKLACSDTRVNEVVIFIVVSLFLVLPFALIIMSYVRIVSSILKVPSSQGIYKAFSTCGSHLSVVSLFYGTVIGLYLCPSSNNSTVKETVMSLMYTVVTPMLNPFIYSLRNRDIKGAMERIFCKRKIQLNL.

Topologically, residues 1 to 29 (MTERNQTVISQFLLLGLPIPPEHQHVFYA) are extracellular. Asn5 is a glycosylation site (N-linked (GlcNAc...) asparagine). The chain crosses the membrane as a helical span at residues 30–50 (LFLSMYLTTVLGNLIIIILIL). The Cytoplasmic segment spans residues 51–59 (LDSHLHTPM). A helical transmembrane segment spans residues 60–81 (YLFLSNLSFSDLCFSSVTMPKL). The Extracellular segment spans residues 82–97 (LQNMQSQVPSIPYAGC). The cysteines at positions 97 and 179 are disulfide-linked. Residues 98 to 118 (LSQIYFFLFFGDLGNFLLVAM) traverse the membrane as a helical segment. Over 119–143 (AYDRYVAICFPLHYMSIMSPKLCVS) the chain is Cytoplasmic. A helical transmembrane segment spans residues 144 to 164 (LVVLSWVLTTFHAMLHTLLMA). The Extracellular portion of the chain corresponds to 165-196 (RLSFCEDNVIPHFFCDMSALLKLACSDTRVNE). Residues 197–217 (VVIFIVVSLFLVLPFALIIMS) form a helical membrane-spanning segment. The Cytoplasmic segment spans residues 218 to 240 (YVRIVSSILKVPSSQGIYKAFST). A helical transmembrane segment spans residues 241-261 (CGSHLSVVSLFYGTVIGLYLC). The Extracellular segment spans residues 262–271 (PSSNNSTVKE). Asn265 and Asn266 each carry an N-linked (GlcNAc...) asparagine glycan. Residues 272–292 (TVMSLMYTVVTPMLNPFIYSL) form a helical membrane-spanning segment. At 293 to 314 (RNRDIKGAMERIFCKRKIQLNL) the chain is on the cytoplasmic side.

The protein belongs to the G-protein coupled receptor 1 family. In terms of tissue distribution, olfactory epithelium.

The protein localises to the cell membrane. Odorant receptor. Activated by a lily-derived aldehyde as well as other odorants. May signal through an inositol 1,4,5-trisphosphate (IP3) second messenger system. The protein is Olfactory receptor 1 of Rattus norvegicus (Rat).